The chain runs to 154 residues: Myoglobin (154 aa).

Residues 2 to 148 enclose the Globin domain; the sequence is GLSEGEWQLV…FRKDIAAKYK (147 aa). S4 bears the Phosphoserine mark. H65 lines the nitrite pocket. O2 is bound at residue H65. Residue T68 is modified to Phosphothreonine. H94 contacts heme b.

Monomer.

It localises to the cytoplasm. Its subcellular location is the sarcoplasm. The enzyme catalyses Fe(III)-heme b-[protein] + nitric oxide + H2O = Fe(II)-heme b-[protein] + nitrite + 2 H(+). It carries out the reaction H2O2 + AH2 = A + 2 H2O. Monomeric heme protein which primary function is to store oxygen and facilitate its diffusion within muscle tissues. Reversibly binds oxygen through a pentacoordinated heme iron and enables its timely and efficient release as needed during periods of heightened demand. Depending on the oxidative conditions of tissues and cells, and in addition to its ability to bind oxygen, it also has a nitrite reductase activity whereby it regulates the production of bioactive nitric oxide. Under stress conditions, like hypoxia and anoxia, it also protects cells against reactive oxygen species thanks to its pseudoperoxidase activity. This is Myoglobin (MB) from Delphinapterus leucas (Beluga whale).